Here is a 178-residue protein sequence, read N- to C-terminus: Actin-related protein 2/3 complex subunit 3-B (178 aa).

Belongs to the ARPC3 family. In terms of assembly, component of the Arp2/3 complex composed of actr2/arp2, actr3/arp3, arpc1 (arpc1a or arpc1b), arpc2, arpc3, arpc4 and arpc5.

It is found in the cytoplasm. The protein resides in the cytoskeleton. It localises to the cell projection. Its subcellular location is the nucleus. Its function is as follows. Component of the Arp2/3 complex, a multiprotein complex that mediates actin polymerization upon stimulation by nucleation-promoting factor (NPF). The Arp2/3 complex mediates the formation of branched actin networks in the cytoplasm, providing the force for cell motility. In addition to its role in the cytoplasmic cytoskeleton, the Arp2/3 complex also promotes actin polymerization in the nucleus, thereby regulating gene transcription and repair of damaged DNA. The Arp2/3 complex promotes homologous recombination (HR) repair in response to DNA damage by promoting nuclear actin polymerization, leading to drive motility of double-strand breaks (DSBs). The sequence is that of Actin-related protein 2/3 complex subunit 3-B (arpc3-b) from Xenopus laevis (African clawed frog).